Here is a 317-residue protein sequence, read N- to C-terminus: Ribose-phosphate pyrophosphokinase (317 aa).

Residues 43–45 (DGE) and 102–103 (RQ) contribute to the ATP site. Residues His136 and Asp175 each coordinate Mg(2+). Residue Lys198 is part of the active site. D-ribose 5-phosphate contacts are provided by residues Arg200, Asp224, and 228–232 (DTAGT).

It belongs to the ribose-phosphate pyrophosphokinase family. Class I subfamily. In terms of assembly, homohexamer. Mg(2+) serves as cofactor.

Its subcellular location is the cytoplasm. The catalysed reaction is D-ribose 5-phosphate + ATP = 5-phospho-alpha-D-ribose 1-diphosphate + AMP + H(+). Its pathway is metabolic intermediate biosynthesis; 5-phospho-alpha-D-ribose 1-diphosphate biosynthesis; 5-phospho-alpha-D-ribose 1-diphosphate from D-ribose 5-phosphate (route I): step 1/1. Its function is as follows. Involved in the biosynthesis of the central metabolite phospho-alpha-D-ribosyl-1-pyrophosphate (PRPP) via the transfer of pyrophosphoryl group from ATP to 1-hydroxyl of ribose-5-phosphate (Rib-5-P). The polypeptide is Ribose-phosphate pyrophosphokinase (Bacillus anthracis).